We begin with the raw amino-acid sequence, 376 residues long: tRNA-specific 2-thiouridylase MnmA (376 aa).

Residues 9 to 16 (AMSGGIDS) and Met-35 each bind ATP. The active-site Nucleophile is Cys-105. Cys-105 and Cys-202 form a disulfide bridge. Gly-129 lines the ATP pocket. Positions 151-153 (KDQ) are interaction with tRNA. Cys-202 acts as the Cysteine persulfide intermediate in catalysis. An interaction with tRNA region spans residues 312 to 313 (RY).

The protein belongs to the MnmA/TRMU family.

It is found in the cytoplasm. It catalyses the reaction S-sulfanyl-L-cysteinyl-[protein] + uridine(34) in tRNA + AH2 + ATP = 2-thiouridine(34) in tRNA + L-cysteinyl-[protein] + A + AMP + diphosphate + H(+). Functionally, catalyzes the 2-thiolation of uridine at the wobble position (U34) of tRNA, leading to the formation of s(2)U34. The sequence is that of tRNA-specific 2-thiouridylase MnmA from Amoebophilus asiaticus (strain 5a2).